A 151-amino-acid polypeptide reads, in one-letter code: Large ribosomal subunit protein bL9 (151 aa).

This sequence belongs to the bacterial ribosomal protein bL9 family.

In terms of biological role, binds to the 23S rRNA. The polypeptide is Large ribosomal subunit protein bL9 (Nitrosococcus oceani (strain ATCC 19707 / BCRC 17464 / JCM 30415 / NCIMB 11848 / C-107)).